Here is a 359-residue protein sequence, read N- to C-terminus: ATP-dependent 6-phosphofructokinase 1 (359 aa).

Residues glycine 14, 78 to 79 (KG), and 115 to 118 (GDGS) each bind ATP. Aspartate 116 provides a ligand contact to Mg(2+). Substrate-binding positions include 139–141 (TID), arginine 176, 183–185 (MGR), glutamate 236, arginine 277, and 283–286 (HIQR). The active-site Proton acceptor is aspartate 141.

This sequence belongs to the phosphofructokinase type A (PFKA) family. Mixed-substrate PFK group III subfamily. Homodimer or homotetramer. Mg(2+) serves as cofactor.

The protein localises to the cytoplasm. It carries out the reaction beta-D-fructose 6-phosphate + ATP = beta-D-fructose 1,6-bisphosphate + ADP + H(+). It participates in carbohydrate degradation; glycolysis; D-glyceraldehyde 3-phosphate and glycerone phosphate from D-glucose: step 3/4. In terms of biological role, catalyzes the phosphorylation of D-fructose 6-phosphate to fructose 1,6-bisphosphate by ATP, the first committing step of glycolysis. This Nostoc sp. (strain PCC 7120 / SAG 25.82 / UTEX 2576) protein is ATP-dependent 6-phosphofructokinase 1.